The chain runs to 212 residues: uncharacterized protein (212 aa).

Disordered regions lie at residues M1 to L148 and E168 to D190. Basic and acidic residues predominate over residues K61–K70. Residues D71 to L85 show a composition bias toward polar residues. Composition is skewed to basic and acidic residues over residues L99–L115, E124–K144, and E168–S180.

This is an uncharacterized protein from Homo sapiens (Human).